The primary structure comprises 751 residues: Catalase-peroxidase (751 aa).

Residues 1-21 form a disordered region; that stretch reads MSNESKCPFHQTAGGGTTNRD. Positions 90 to 244 form a cross-link, tryptophyl-tyrosyl-methioninium (Trp-Tyr) (with M-270); the sequence is WHSAGTYRIG…LAAVQMGLIY (155 aa). The active-site Proton acceptor is His-91. The tryptophyl-tyrosyl-methioninium (Tyr-Met) (with W-90) cross-link spans 244 to 270; that stretch reads YVNPEGPEGNPDPVASGKDIRETFGRM. Residue His-285 participates in heme b binding. Positions 365–390 are disordered; it reads AHQWRPKEGKGAGTVPDAHDPGKKHA.

Belongs to the peroxidase family. Peroxidase/catalase subfamily. In terms of assembly, homodimer or homotetramer. Requires heme b as cofactor. In terms of processing, formation of the three residue Trp-Tyr-Met cross-link is important for the catalase, but not the peroxidase activity of the enzyme.

It carries out the reaction H2O2 + AH2 = A + 2 H2O. It catalyses the reaction 2 H2O2 = O2 + 2 H2O. Functionally, bifunctional enzyme with both catalase and broad-spectrum peroxidase activity. The chain is Catalase-peroxidase from Pseudomonas putida (strain GB-1).